The chain runs to 142 residues: 3-hydroxyacyl-[acyl-carrier-protein] dehydratase FabZ (142 aa).

Residue His-48 is part of the active site.

Belongs to the thioester dehydratase family. FabZ subfamily.

The protein localises to the cytoplasm. It catalyses the reaction a (3R)-hydroxyacyl-[ACP] = a (2E)-enoyl-[ACP] + H2O. Functionally, involved in unsaturated fatty acids biosynthesis. Catalyzes the dehydration of short chain beta-hydroxyacyl-ACPs and long chain saturated and unsaturated beta-hydroxyacyl-ACPs. The protein is 3-hydroxyacyl-[acyl-carrier-protein] dehydratase FabZ of Anoxybacillus flavithermus (strain DSM 21510 / WK1).